Consider the following 137-residue polypeptide: Large-conductance mechanosensitive channel (137 aa).

Helical transmembrane passes span 10–30 (FAMR…AAFG) and 76–96 (GTFI…FSAV).

It belongs to the MscL family. Homopentamer.

The protein resides in the cell inner membrane. Channel that opens in response to stretch forces in the membrane lipid bilayer. May participate in the regulation of osmotic pressure changes within the cell. The protein is Large-conductance mechanosensitive channel of Yersinia pseudotuberculosis serotype O:1b (strain IP 31758).